A 100-amino-acid chain; its full sequence is MDLTPREKDKLLIFTAGLLAERRLARGLRLNHPEAVAYISAALLEGARDGHTVAELMHIGTTLLSRDQVMEGVPEMIPEIQIEATFPDGTKLVTVHQPIA.

The protein belongs to the urease gamma subunit family. As to quaternary structure, heterotrimer of UreA (gamma), UreB (beta) and UreC (alpha) subunits. Three heterotrimers associate to form the active enzyme.

The protein resides in the cytoplasm. It carries out the reaction urea + 2 H2O + H(+) = hydrogencarbonate + 2 NH4(+). The protein operates within nitrogen metabolism; urea degradation; CO(2) and NH(3) from urea (urease route): step 1/1. In Azotobacter vinelandii (strain DJ / ATCC BAA-1303), this protein is Urease subunit gamma.